The chain runs to 182 residues: IQ domain-containing protein F1 (182 aa).

Basic and acidic residues-rich tracts occupy residues 1 to 10 and 31 to 43; these read MGEEQQKPEE and ETEK…KQEL. The tract at residues 1-43 is disordered; sequence MGEEQQKPEELNAPTDDAPQEKQQPADLSSETEKAKSKKKQEL. IQ domains lie at 45–74 and 101–130; these read EKDQ…SAWI and EQWA…AVRT.

Interacts with calmodulin. Specifically expressed in testes and mature spermatozoa (at protein level).

Its subcellular location is the cytoplasmic vesicle. It localises to the secretory vesicle. It is found in the acrosome. Functionally, involved in sperm capacitation and acrosome reaction. This chain is IQ domain-containing protein F1, found in Mus musculus (Mouse).